A 510-amino-acid polypeptide reads, in one-letter code: Allene oxide synthase 2, chloroplastic (510 aa).

The N-terminal 31 residues, 1 to 31 (MALTLSFSLPLPSLHQKIPSKYSTFRPIIVS), are a transit peptide targeting the chloroplast. K127, H158, and K162 together coordinate heme b. N315 and K321 together coordinate (13S)-hydroperoxy-(9Z,11E)-octadecadienoate. N315 provides a ligand contact to (13S)-hydroperoxy-(9Z,11E,15Z)-octadecatrienoate. K463 and C465 together coordinate heme b.

Belongs to the cytochrome P450 family. Heme b serves as cofactor. In terms of tissue distribution, expressed in flower buds, leaves, roots, stems, petioles and cotyledons. Not detected in ripe fruits. Expressed in sieve elements.

The protein localises to the plastid. It localises to the chloroplast inner membrane. The enzyme catalyses (13S)-hydroperoxy-(9Z,11E,15Z)-octadecatrienoate = (9Z,13S,15Z)-12,13-epoxyoctadeca-9,11,15-trienoate + H2O. The catalysed reaction is (13S)-hydroperoxy-(9Z,11E)-octadecadienoate = (9Z,13S)-12,13-epoxyoctadeca-9,11-dienoate + H2O. Cytochrome P450 of the CYP74A subfamily involved in the biosynthesis of jasmonic acid from lipoxygenase-derived hydroperoxides of free fatty acids. Catalyzes the synthesis of unstable allene oxide, which is further converted spontaneously by hydrolysis or cyclization. Metabolizes 13- but not 9-hydroperoxides of linoleic and linolenic acids. Can use 15S-hydroperoxy-11(Z),13(E),17(Z)-eicosatrienoic acid (15-HPET) and 13S-hydroperoxy-9(Z),11(E),15(Z)-octadecatrienoic acid (13-HPOT) as substrates, but only 50% activity with 13S-hydroperoxy-9(Z),11(E)-octadecadienoic acid (13-HPOD). The sequence is that of Allene oxide synthase 2, chloroplastic from Solanum lycopersicum (Tomato).